The following is a 114-amino-acid chain: Flagellar hook-basal body complex protein FliE (114 aa).

Belongs to the FliE family.

Its subcellular location is the bacterial flagellum basal body. The chain is Flagellar hook-basal body complex protein FliE from Desulfitobacterium hafniense (strain Y51).